The primary structure comprises 203 residues: Ribonuclease HII (203 aa).

Residues 18–203 (GHYAGVDEVG…SFRPVREALA (186 aa)) enclose the RNase H type-2 domain. Residues aspartate 24, glutamate 25, and aspartate 116 each contribute to the a divalent metal cation site.

Belongs to the RNase HII family. Mn(2+) serves as cofactor. It depends on Mg(2+) as a cofactor.

It localises to the cytoplasm. It carries out the reaction Endonucleolytic cleavage to 5'-phosphomonoester.. Its function is as follows. Endonuclease that specifically degrades the RNA of RNA-DNA hybrids. The polypeptide is Ribonuclease HII (Shewanella halifaxensis (strain HAW-EB4)).